Here is a 258-residue protein sequence, read N- to C-terminus: Mediator of RNA polymerase II transcription subunit 4 (258 aa).

A coiled-coil region spans residues 52-101; sequence FRKMLELAEEQAKVEEAMDQLRAKVEVHDREIQKLQKSLKDAELILSTAI. Disordered regions lie at residues 164-208 and 234-258; these read GKSE…EVPN and LETR…SDSQ. The segment covering 166–190 has biased composition (polar residues); the sequence is SEQNINGGTVTHQNSGMPSEQQRTL. A compositionally biased stretch (gly residues) spans 194-204; that stretch reads AGSGSGSGAGG. Residues 246-258 are compositionally biased toward low complexity; sequence STDSSSSSSSDSQ.

The protein belongs to the Mediator complex subunit 4 family. In terms of assembly, component of the Mediator complex, which includes at least MED4, MED6, MED14, MED17, MED18, MED20, MED21, MED23, MED24, MED27, MED30 and MED31. Interacts with MED10 and MED21.

The protein localises to the nucleus. Its function is as follows. Component of the Mediator complex, a coactivator involved in the regulated transcription of nearly all RNA polymerase II-dependent genes. Mediator functions as a bridge to convey information from gene-specific regulatory proteins to the basal RNA polymerase II transcription machinery. Mediator is recruited to promoters by direct interactions with regulatory proteins and serves as a scaffold for the assembly of a functional preinitiation complex with RNA polymerase II and the general transcription factors. Required for activated transcription of the MtnA, MtnB and MtnD genes. The protein is Mediator of RNA polymerase II transcription subunit 4 (MED4) of Drosophila melanogaster (Fruit fly).